We begin with the raw amino-acid sequence, 260 residues long: Hydroxyethylthiazole kinase 1 (260 aa).

Position 39 (Met-39) interacts with substrate. ATP-binding residues include Arg-115 and Thr-160. Gly-187 lines the substrate pocket.

It belongs to the Thz kinase family. Mg(2+) is required as a cofactor.

It catalyses the reaction 5-(2-hydroxyethyl)-4-methylthiazole + ATP = 4-methyl-5-(2-phosphooxyethyl)-thiazole + ADP + H(+). It participates in cofactor biosynthesis; thiamine diphosphate biosynthesis; 4-methyl-5-(2-phosphoethyl)-thiazole from 5-(2-hydroxyethyl)-4-methylthiazole: step 1/1. Functionally, catalyzes the phosphorylation of the hydroxyl group of 4-methyl-5-beta-hydroxyethylthiazole (THZ). In Streptococcus pneumoniae serotype 2 (strain D39 / NCTC 7466), this protein is Hydroxyethylthiazole kinase 1.